The sequence spans 496 residues: Tripartite motif-containing protein 30A (496 aa).

An RING-type zinc finger spans residues 15-59; it reads CPICLELLKEPVSADCNHSFCRACITLNYESNRNTDGKGNCPVCR. A B box-type zinc finger spans residues 91–132; sequence QKVNICAQHGEKLRLFCRKDMMVICWLCERSQEHRGHQTALI. Residues cysteine 96, histidine 99, cysteine 118, and histidine 124 each contribute to the Zn(2+) site. Residues 173–239 are a coiled coil; it reads NQIQINVENV…RDLISDVEHH (67 aa). Residues 205 to 210 are highly hydrophilic; sequence KKEKKE. A Nuclear localization signal motif is present at residues 268–276; it reads TVPQKRKRT. The 216-residue stretch at 281–496 folds into the B30.2/SPRY domain; sequence DLKGMLQVYQ…EPMTICGPPS (216 aa).

As to quaternary structure, homomultimer. Interacts with NR2C2/TAK1, TAB2 and TAB3. Does not interact with NLRP3, NLRC4 or TAB1. As to expression, highly expressed in spleen and lymph nodes (at protein level).

The protein resides in the cytoplasm. It is found in the nucleus. In terms of biological role, trans-acting factor that regulates gene expression of interleukin 2 receptor alpha chain. May affect IL2R-alpha expression through cis-acting negative regulatory elements or through competition with proteins that bind to enhancer or activator sequences. Negatively regulates Toll-like receptor (TLR)-mediated activation of NFKB by promoting degradation of TAB2 and TAB3 and preventing TRAF6 autoubiquitination. Negatively regulates production of reactive oxygen species (ROS) which inhibits activation of the NLRP3 inflammasome complex. This, in turn, regulates activation of CASP1 and subsequent cleavage of IL1B and IL18. No activity detected against a range of retroviruses including a number of lentiviruses, gammaretroviruses and betaretroviruses. This chain is Tripartite motif-containing protein 30A (Trim30a), found in Mus musculus (Mouse).